The primary structure comprises 749 residues: MAHRKLESVGSGMLDHRVRPGPVPHSQEPESEDMELPLEGYVPEGLELAALRPESPAPEEQECHNHSPDGDSSSDYVNNTSEEEDYDEGLPEEEEGITYYIRYCPEDDSYLEGMDCNGEEYLAHSAHPVDTDECQEAVEEWTDSAGPHPHGHEAEGSQDYPDGQLPIPEDEPSVLEAHDQEEDGHYCASKEGYQDYYPEEANGNTGASPYRLRRGDGDLEDQEEDIDQIVAEIKMSLSMTSITSASEASPEHGPEPGPEDSVEACPPIKASCSPSRHEARPKSLNLLPEAKHPGDPQRGFKPKTRTPEERLKWPHEQVCNGLEQPRKQQRSDLNGPVDNNNIPETKKVASFPSFVAVPGPCEPEDLIDGIIFAANYLGSTQLLSERNPSKNIRMMQAQEAVSRVKRMQKAAKIKKKANSEGDAQTLTEVDLFISTQRIKVLNADTQETMMDHALRTISYIADIGNIVVLMARRRMPRSASQDCIETTPGAQEGKKQYKMICHVFESEDAQLIAQSIGQAFSVAYQEFLRANGINPEDLSQKEYSDIINTQEMYNDDLIHFSNSENCKELQLEKHKGEILGVVVVESGWGSILPTVILANMMNGGPAARSGKLSIGDQIMSINGTSLVGLPLATCQGIIKGLKNQTQVKLNIVSCPPVTTVLIKRPDLKYQLGFSVQNGIICSLMRGGIAERGGVRVGHRIIEINGQSVVATAHEKIVQALSNSVGEIHMKTMPAAMFRLLTGQETPLYI.

Disordered regions lie at residues 1-94, 130-220, and 238-344; these read MAHR…PEEE, DTDE…GDLE, and SMTS…NIPE. Serine 11 carries the phosphoserine modification. Polar residues predominate over residues 70 to 80; the sequence is GDSSSDYVNNT. 2 stretches are compositionally biased toward acidic residues: residues 81-94 and 131-142; these read SEEE…PEEE and TDECQEAVEEWT. The interval 185–270 is STXBP1-binding; the sequence is HYCASKEGYQ…SVEACPPIKA (86 aa). Position 208 is a phosphoserine (serine 208). Polar residues predominate over residues 238–247; that stretch reads SMTSITSASE. Positions 305-315 are enriched in basic and acidic residues; it reads RTPEERLKWPH. Positions 368-555 constitute a PID domain; sequence DGIIFAANYL…IINTQEMYND (188 aa). 2 consecutive PDZ domains span residues 568 to 654 and 659 to 734; these read ELQL…IVSC and TVLI…TMPA.

As to quaternary structure, part of a multimeric complex containing STXBP1 and syntaxin-1. Binds to the cytoplasmic domain of amyloid-beta protein, and to the nuclear factor NF-kappa-B/p65 via its PDZ domain. Interacts with the N-terminal domain of NECAB3. Brain.

Functionally, putative function in synaptic vesicle exocytosis by binding to STXBP1, an essential component of the synaptic vesicle exocytotic machinery. May modulate processing of the amyloid-beta precursor protein (APP) and hence formation of APP-beta. The sequence is that of Amyloid-beta A4 precursor protein-binding family A member 2 (APBA2) from Homo sapiens (Human).